The chain runs to 129 residues: uncharacterized protein (129 aa).

This sequence belongs to the asfivirus C129R family.

Its subcellular location is the virion. Its function is as follows. Plays a role in the inhibition of type I interferon signaling pathway. Mechanistically, specifically interacts with 2',3'-cGAMP and cleaves it via its phosphodiesterase activity. In turn, prevents 2',3'-cGAMP interaction with host ER-resident STING1 leading to inhibition of downstream signaling pathway and type I interferon production. This is an uncharacterized protein from African swine fever virus (isolate Pig/Kenya/KEN-50/1950) (ASFV).